Here is a 1008-residue protein sequence, read N- to C-terminus: Pheromone-regulated membrane protein 10 (1008 aa).

Disordered stretches follow at residues 1–273 (MSQS…TFLG), 342–384 (KLPE…FYTP), and 477–506 (KNDF…TQDE). Positions 70–85 (DTIISNASTTNNSSSD) are enriched in low complexity. A compositionally biased stretch (polar residues) spans 95–111 (GENSNLPNFNFSANQVH). Composition is skewed to acidic residues over residues 116–132 (ANED…EDTF) and 143–161 (GSDE…EDKE). The segment covering 162–186 (EVVNEKEEIADDLHSKSSKTSRESK) has biased composition (basic and acidic residues). Residues 188 to 204 (FNAGTKNSRRSLNSLQR) are compositionally biased toward polar residues. Residues 205-214 (NETDVTDQLK) are compositionally biased toward basic and acidic residues. Low complexity predominate over residues 215–225 (RTTSTTSSSKR). Positions 226 to 239 (SNSDKRTGFKDILR) are enriched in basic and acidic residues. Residues 346-364 (GTSSDQQLDYSDTSASNLI) show a composition bias toward polar residues. The segment covering 483–498 (GPKRMANKIPGRKHGA) has biased composition (basic residues). 10 helical membrane passes run 683–703 (SPWL…PFAF), 707–727 (WYDV…QFFV), 736–756 (SVFE…IGSI), 762–782 (FCFS…YIIL), 800–820 (MFYA…GASL), 838–858 (IKQD…LGLI), 866–886 (LPIM…AGKH), 892–912 (VTEF…NLYS), 917–937 (GMAV…GIAS), and 978–998 (VKVS…VYPF).

Belongs to the ThrE exporter (TC 2.A.79) family.

The protein resides in the membrane. The polypeptide is Pheromone-regulated membrane protein 10 (Debaryomyces hansenii (strain ATCC 36239 / CBS 767 / BCRC 21394 / JCM 1990 / NBRC 0083 / IGC 2968) (Yeast)).